The sequence spans 539 residues: Protein PNS1 (539 aa).

The disordered stretch occupies residues 1-38 (MPLNEKYERPPQPPPAYDPNHRPPSSSENSAAANVNDG). Over 1-81 (MPLNEKYERP…NDNKPRWNDW (81 aa)) the chain is Cytoplasmic. A compositionally biased stretch (low complexity) spans 25–36 (SSSENSAAANVN). The chain crosses the membrane as a helical span at residues 82–102 (PFTIFFLCTVGGFIAIAAITL). Residues 103 to 129 (RAWSQTYSSTGSGIYDGVNTGTLNTNA) lie on the Extracellular side of the membrane. A helical membrane pass occupies residues 130–150 (AILLVFVCIIALVFSVLGLTL). Topologically, residues 151–157 (CRIFPKQ) are cytoplasmic. The helical transmembrane segment at 158-178 (FIYCGMVINLVASLGTAIMYM) threads the bilayer. Residues 179–182 (SLRY) are Extracellular-facing. A helical membrane pass occupies residues 183–203 (WSAGIVFLVFTFMTAWCYWGM). Topologically, residues 204 to 226 (RSRIPLSVAVLKVVVDAMKKCPQ) are cytoplasmic. Residues 227–247 (IFFVSFVGALVASAFGFLFSA) traverse the membrane as a helical segment. The Extracellular segment spans residues 248–274 (VIVATYIKYDPNSSNGGCDVSGGSCSH). Residue N259 is glycosylated (N-linked (GlcNAc...) asparagine). The chain crosses the membrane as a helical span at residues 275–295 (SKLIGVLVVVFFCGYYISEVI). Residues 296-332 (RNVIHCVISGVFGSWYYMSKSDQGMPRWPAFGALKRA) are Cytoplasmic-facing. Residues 333–353 (MTYSFGSICFGSLLVALIDLL) traverse the membrane as a helical segment. The Extracellular portion of the chain corresponds to 354–371 (RQILQMIRHDVTSSGGGQ). Residues 372 to 392 (IAIQILFMVFDWIIGFLKWLA) form a helical membrane-spanning segment. The Cytoplasmic segment spans residues 393-436 (EYFNHYAYSFIALYGKPYLRAAKETWYMLREKGMDALINDNLIN). A helical membrane pass occupies residues 437–457 (IALGLFSMFASYMTALFTFLY). The Extracellular segment spans residues 458 to 473 (LRFTSPQYNSNGAYNG). Residues 474–494 (ALMAFSFVIALQICNIATEAI) form a helical membrane-spanning segment. At 495-539 (RSGTATFFVALGNDPEVFHHSYPHRFDEIFRAYPDVLRKLSHQNV) the chain is on the cytoplasmic side.

The protein belongs to the CTL (choline transporter-like) family.

The protein localises to the cell membrane. Functionally, probably involved in transport through the plasma membrane. The chain is Protein PNS1 (PNS1) from Saccharomyces cerevisiae (strain ATCC 204508 / S288c) (Baker's yeast).